Consider the following 397-residue polypeptide: Elongation factor Tu (397 aa).

Residues 10–206 (KPHVNIGTIG…AVDTSIPQPE (197 aa)) form the tr-type G domain. A G1 region spans residues 19 to 26 (GHIDHGKT). 19–26 (GHIDHGKT) contacts GTP. Position 26 (Thr-26) interacts with Mg(2+). The tract at residues 62–66 (GITIS) is G2. A G3 region spans residues 83–86 (DCPG). Residues 83 to 87 (DCPGH) and 138 to 141 (NKSD) each bind GTP. The interval 138 to 141 (NKSD) is G4. The G5 stretch occupies residues 176-178 (SAL).

Belongs to the TRAFAC class translation factor GTPase superfamily. Classic translation factor GTPase family. EF-Tu/EF-1A subfamily. Monomer.

Its subcellular location is the cytoplasm. The enzyme catalyses GTP + H2O = GDP + phosphate + H(+). Its function is as follows. GTP hydrolase that promotes the GTP-dependent binding of aminoacyl-tRNA to the A-site of ribosomes during protein biosynthesis. This is Elongation factor Tu from Salinispora arenicola (strain CNS-205).